We begin with the raw amino-acid sequence, 932 residues long: Serine/threonine-protein kinase PknD (932 aa).

In terms of domain architecture, Protein kinase spans 4 to 291 (YDIVRIIGKG…ELKEDIESHL (288 aa)). ATP-binding positions include 10 to 18 (IGKGGMGEV) and Lys-33. The Proton acceptor role is filled by Asp-138.

The protein belongs to the protein kinase superfamily. Ser/Thr protein kinase family. Post-translationally, autophosphorylated on serine and threonine residues.

It carries out the reaction L-seryl-[protein] + ATP = O-phospho-L-seryl-[protein] + ADP + H(+). The catalysed reaction is L-threonyl-[protein] + ATP = O-phospho-L-threonyl-[protein] + ADP + H(+). Functionally, together with the serine/threonine kinase Pkn1, may play a role in the specific interactions with host proteins during intracellular growth. This chain is Serine/threonine-protein kinase PknD, found in Chlamydia pneumoniae (Chlamydophila pneumoniae).